The sequence spans 202 residues: NADH-quinone oxidoreductase subunit C (202 aa).

It belongs to the complex I 30 kDa subunit family. As to quaternary structure, NDH-1 is composed of 14 different subunits. Subunits NuoB, C, D, E, F, and G constitute the peripheral sector of the complex.

It localises to the cell inner membrane. It catalyses the reaction a quinone + NADH + 5 H(+)(in) = a quinol + NAD(+) + 4 H(+)(out). Its function is as follows. NDH-1 shuttles electrons from NADH, via FMN and iron-sulfur (Fe-S) centers, to quinones in the respiratory chain. The immediate electron acceptor for the enzyme in this species is believed to be ubiquinone. Couples the redox reaction to proton translocation (for every two electrons transferred, four hydrogen ions are translocated across the cytoplasmic membrane), and thus conserves the redox energy in a proton gradient. The sequence is that of NADH-quinone oxidoreductase subunit C from Brucella canis (strain ATCC 23365 / NCTC 10854 / RM-666).